We begin with the raw amino-acid sequence, 199 residues long: ATP-dependent Clp protease proteolytic subunit (199 aa).

S102 acts as the Nucleophile in catalysis. The active site involves H127.

Belongs to the peptidase S14 family. As to quaternary structure, component of the chloroplastic Clp protease core complex.

It is found in the plastid. Its subcellular location is the chloroplast stroma. The catalysed reaction is Hydrolysis of proteins to small peptides in the presence of ATP and magnesium. alpha-casein is the usual test substrate. In the absence of ATP, only oligopeptides shorter than five residues are hydrolyzed (such as succinyl-Leu-Tyr-|-NHMec, and Leu-Tyr-Leu-|-Tyr-Trp, in which cleavage of the -Tyr-|-Leu- and -Tyr-|-Trp bonds also occurs).. Functionally, cleaves peptides in various proteins in a process that requires ATP hydrolysis. Has a chymotrypsin-like activity. Plays a major role in the degradation of misfolded proteins. The polypeptide is ATP-dependent Clp protease proteolytic subunit (Physcomitrium patens (Spreading-leaved earth moss)).